A 273-amino-acid polypeptide reads, in one-letter code: Imidazole glycerol phosphate synthase subunit HisF (273 aa).

Catalysis depends on residues aspartate 11 and aspartate 134.

This sequence belongs to the HisA/HisF family. In terms of assembly, heterodimer of HisH and HisF.

It is found in the cytoplasm. The catalysed reaction is 5-[(5-phospho-1-deoxy-D-ribulos-1-ylimino)methylamino]-1-(5-phospho-beta-D-ribosyl)imidazole-4-carboxamide + L-glutamine = D-erythro-1-(imidazol-4-yl)glycerol 3-phosphate + 5-amino-1-(5-phospho-beta-D-ribosyl)imidazole-4-carboxamide + L-glutamate + H(+). It participates in amino-acid biosynthesis; L-histidine biosynthesis; L-histidine from 5-phospho-alpha-D-ribose 1-diphosphate: step 5/9. Functionally, IGPS catalyzes the conversion of PRFAR and glutamine to IGP, AICAR and glutamate. The HisF subunit catalyzes the cyclization activity that produces IGP and AICAR from PRFAR using the ammonia provided by the HisH subunit. In Methanococcoides burtonii (strain DSM 6242 / NBRC 107633 / OCM 468 / ACE-M), this protein is Imidazole glycerol phosphate synthase subunit HisF.